The sequence spans 370 residues: Phosphoserine aminotransferase (370 aa).

N-acetylmethionine is present on Met-1. Positions 44 and 45 each coordinate O-phospho-L-serine. Position 51 is an N6-acetyllysine (Lys-51). Gly-79, Cys-80, and Trp-107 together coordinate pyridoxal 5'-phosphate. Lys-127 is subject to N6-acetyllysine. Pyridoxal 5'-phosphate is bound by residues Thr-156, Asp-176, and Gln-199. The residue at position 200 (Lys-200) is an N6-(pyridoxal phosphate)lysine. Residues Asn-241 and Thr-242 each coordinate pyridoxal 5'-phosphate. 3 positions are modified to N6-acetyllysine: Lys-269, Lys-318, and Lys-323. Phosphoserine is present on Ser-331. Residue Lys-333 is modified to N6-acetyllysine. Positions 335, 336, and 342 each coordinate O-phospho-L-serine.

The protein belongs to the class-V pyridoxal-phosphate-dependent aminotransferase family. SerC subfamily. In terms of assembly, homodimer. Requires pyridoxal 5'-phosphate as cofactor. In terms of tissue distribution, expressed at high levels in the brain, liver, kidney and pancreas, and very weakly expressed in the thymus, prostate, testis and colon.

The catalysed reaction is O-phospho-L-serine + 2-oxoglutarate = 3-phosphooxypyruvate + L-glutamate. It participates in amino-acid biosynthesis; L-serine biosynthesis; L-serine from 3-phospho-D-glycerate: step 2/3. Phosphoserine transaminase activity is strongly stimulated by increasing the ionic strength. Functionally, involved in L-serine biosynthesis via the phosphorylated pathway, a three-step pathway converting the glycolytic intermediate 3-phospho-D-glycerate into L-serine. Catalyzes the second step, that is the pyridoxal 5'-phosphate-dependent transamination of 3-phosphohydroxypyruvate and L-glutamate to O-phosphoserine (OPS) and alpha-ketoglutarate. The sequence is that of Phosphoserine aminotransferase from Homo sapiens (Human).